The chain runs to 370 residues: Integrin-linked kinase-associated serine/threonine phosphatase 2C (370 aa).

At Met-1 the chain carries N-acetylmethionine. The segment at 1-69 (MDLFGDLPEP…SDEEKNGSEE (69 aa)) is disordered. At Ser-13 the chain carries Phosphoserine. Residues 33–45 (SSGDSGSLDTSLS) are compositionally biased toward low complexity. Positions 46–69 (EEVKNEGKGAKRKASDEEKNGSEE) are enriched in basic and acidic residues. The 283-residue stretch at 86-368 (KGYVAERKGE…DNVTVMVVRI (283 aa)) folds into the PPM-type phosphatase domain. 2 residues coordinate Mn(2+): Asp-130 and Gly-131. Lys-188 carries the post-translational modification N6-acetyllysine. Residues Asp-304 and Asp-359 each contribute to the Mn(2+) site.

The protein belongs to the PP2C family. Interacts with ILK. Requires Mg(2+) as cofactor. Mn(2+) serves as cofactor.

Its subcellular location is the cytoplasm. It catalyses the reaction O-phospho-L-seryl-[protein] + H2O = L-seryl-[protein] + phosphate. The enzyme catalyses O-phospho-L-threonyl-[protein] + H2O = L-threonyl-[protein] + phosphate. Its function is as follows. Protein phosphatase that may play a role in regulation of cell cycle progression via dephosphorylation of its substrates whose appropriate phosphorylation states might be crucial for cell proliferation. Selectively associates with integrin linked kinase (ILK), to modulate cell adhesion and growth factor signaling. Inhibits the ILK-GSK3B signaling axis and may play an important role in inhibiting oncogenic transformation. The protein is Integrin-linked kinase-associated serine/threonine phosphatase 2C (ILKAP) of Bos taurus (Bovine).